The primary structure comprises 147 residues: Myoglobin (147 aa).

A Globin domain is found at 2 to 141 (ADFDMVLKCW…IIADMEADYK (140 aa)). His-60 provides a ligand contact to nitrite. His-60 contacts O2. His-89 provides a ligand contact to heme b.

The protein belongs to the globin family. Monomeric.

It localises to the cytoplasm. Its subcellular location is the sarcoplasm. The catalysed reaction is Fe(III)-heme b-[protein] + nitric oxide + H2O = Fe(II)-heme b-[protein] + nitrite + 2 H(+). It carries out the reaction H2O2 + AH2 = A + 2 H2O. In terms of biological role, monomeric heme protein which primary function is to store oxygen and facilitate its diffusion within muscle tissues. Reversibly binds oxygen through a pentacoordinated heme iron and enables its timely and efficient release as needed during periods of heightened demand. Depending on the oxidative conditions of tissues and cells, and in addition to its ability to bind oxygen, it also has a nitrite reductase activity whereby it regulates the production of bioactive nitric oxide. Under stress conditions, like hypoxia and anoxia, it also protects cells against reactive oxygen species thanks to its pseudoperoxidase activity. The polypeptide is Myoglobin (mb) (Pseudochaenichthys georgianus (South Georgia icefish)).